A 201-amino-acid polypeptide reads, in one-letter code: Large ribosomal subunit protein uL4 (201 aa).

A disordered region spans residues 43–71 (TRAQKTRSEVSGGGKKPWAQKGTGRARAG).

This sequence belongs to the universal ribosomal protein uL4 family. In terms of assembly, part of the 50S ribosomal subunit.

Functionally, one of the primary rRNA binding proteins, this protein initially binds near the 5'-end of the 23S rRNA. It is important during the early stages of 50S assembly. It makes multiple contacts with different domains of the 23S rRNA in the assembled 50S subunit and ribosome. Forms part of the polypeptide exit tunnel. The chain is Large ribosomal subunit protein uL4 from Pseudoalteromonas translucida (strain TAC 125).